The chain runs to 769 residues: Amino-acid acetyltransferase, mitochondrial (769 aa).

The segment at 150–172 (LKASPAKSGQEPTESPKESISAS) is disordered. Polar residues predominate over residues 159-172 (QEPTESPKESISAS). The N-acetyltransferase domain occupies 590-759 (MQPRLGLNDP…YEAVCRSIQP (170 aa)).

Belongs to the acetyltransferase family.

It is found in the mitochondrion. The enzyme catalyses L-glutamate + acetyl-CoA = N-acetyl-L-glutamate + CoA + H(+). It functions in the pathway amino-acid biosynthesis; L-arginine biosynthesis; N(2)-acetyl-L-ornithine from L-glutamate: step 1/4. N-acetylglutamate synthase involved in arginine biosynthesis. The chain is Amino-acid acetyltransferase, mitochondrial (arg2) from Penicillium rubens (strain ATCC 28089 / DSM 1075 / NRRL 1951 / Wisconsin 54-1255) (Penicillium chrysogenum).